Reading from the N-terminus, the 170-residue chain is Adenine phosphoribosyltransferase (170 aa).

This sequence belongs to the purine/pyrimidine phosphoribosyltransferase family. In terms of assembly, homodimer.

Its subcellular location is the cytoplasm. It catalyses the reaction AMP + diphosphate = 5-phospho-alpha-D-ribose 1-diphosphate + adenine. It functions in the pathway purine metabolism; AMP biosynthesis via salvage pathway; AMP from adenine: step 1/1. In terms of biological role, catalyzes a salvage reaction resulting in the formation of AMP, that is energically less costly than de novo synthesis. This Geobacillus sp. (strain WCH70) protein is Adenine phosphoribosyltransferase.